The sequence spans 333 residues: MPIRHCIVHLIDKKPDGTPAVLHARDSELAESAAIENLLADLNDSYNAKQGKAWGFFHAESGAYPFSGWLKEYFDGSQDFTSFSRVAIKHLQTLMEASNLSTGGHVLFAHYQQGMTEYLAIALLHHSEGVAVNAELDVTPSRHLDLGQLHLAARINLSEWKNNQNSKQYISFIKGKNGKKVSEYFRDFIGCQEGVDGPGETRTLLKAFSDYVEKEDLPEESAREKTQTLVDYATAQTKLGEPVTLEELSSLIDEDRPKAFYDHIRNSDYGLSPEIPADKRTLNQFRRFTGRAEGLSISFEAHLLGEKIEYDEAAGTLIIKGLPTQLIDQLKRR.

Belongs to the YejK family.

Its subcellular location is the cytoplasm. It localises to the nucleoid. This is Nucleoid-associated protein PSPPH_1145 from Pseudomonas savastanoi pv. phaseolicola (strain 1448A / Race 6) (Pseudomonas syringae pv. phaseolicola (strain 1448A / Race 6)).